The sequence spans 407 residues: Tyrosine--tRNA ligase 1 (407 aa).

Tyr35 serves as a coordination point for L-tyrosine. A 'HIGH' region motif is present at residues 40–49 (PTGDSLHVGH). Tyr168 and Gln172 together coordinate L-tyrosine. A 'KMSKS' region motif is present at residues 228–232 (KMGKT). Lys231 contacts ATP. Residues 340 to 406 (SSILDVLVHT…GKKKYYKIVI (67 aa)) enclose the S4 RNA-binding domain.

This sequence belongs to the class-I aminoacyl-tRNA synthetase family. TyrS type 1 subfamily. In terms of assembly, homodimer.

The protein localises to the cytoplasm. It catalyses the reaction tRNA(Tyr) + L-tyrosine + ATP = L-tyrosyl-tRNA(Tyr) + AMP + diphosphate + H(+). Its function is as follows. Catalyzes the attachment of tyrosine to tRNA(Tyr) in a two-step reaction: tyrosine is first activated by ATP to form Tyr-AMP and then transferred to the acceptor end of tRNA(Tyr). In Clostridium acetobutylicum (strain ATCC 824 / DSM 792 / JCM 1419 / IAM 19013 / LMG 5710 / NBRC 13948 / NRRL B-527 / VKM B-1787 / 2291 / W), this protein is Tyrosine--tRNA ligase 1.